Here is a 205-residue protein sequence, read N- to C-terminus: Ras-related protein RABB1a (205 aa).

13-20 (GDTGVGKS) is a GTP binding site. The Effector region motif lies at 35–43 (HDLTIGVEF). GTP contacts are provided by residues 61-65 (DTAGQ), 119-122 (NKCD), and 149-150 (SA). Positions 179–205 (ANEPGITPGPFGGKDASSSQQRRGCCG) are disordered. A compositionally biased stretch (polar residues) spans 194–205 (ASSSQQRRGCCG). Residues Cys-203 and Cys-204 are each lipidated (S-geranylgeranyl cysteine).

This sequence belongs to the small GTPase superfamily. Rab family.

The protein resides in the cell membrane. Functionally, intracellular vesicle trafficking and protein transport. The chain is Ras-related protein RABB1a (RABB1A) from Arabidopsis thaliana (Mouse-ear cress).